Consider the following 95-residue polypeptide: Protein TusB (95 aa).

The protein belongs to the DsrH/TusB family. As to quaternary structure, heterohexamer, formed by a dimer of trimers. The hexameric TusBCD complex contains 2 copies each of TusB, TusC and TusD. The TusBCD complex interacts with TusE.

The protein resides in the cytoplasm. Part of a sulfur-relay system required for 2-thiolation of 5-methylaminomethyl-2-thiouridine (mnm(5)s(2)U) at tRNA wobble positions. This is Protein TusB from Buchnera aphidicola subsp. Acyrthosiphon pisum (strain 5A).